The chain runs to 103 residues: NAD(P)H-quinone oxidoreductase subunit 4L, organellar chromatophore (103 aa).

The next 3 helical transmembrane spans lie at Ile-3–Leu-23, Val-32–Asn-52, and Val-63–Leu-83.

The protein belongs to the complex I subunit 4L family. As to quaternary structure, NDH is composed of at least 16 different subunits, 5 of which are encoded in the nucleus.

It localises to the plastid. The protein localises to the organellar chromatophore thylakoid membrane. It carries out the reaction a plastoquinone + NADH + (n+1) H(+)(in) = a plastoquinol + NAD(+) + n H(+)(out). The enzyme catalyses a plastoquinone + NADPH + (n+1) H(+)(in) = a plastoquinol + NADP(+) + n H(+)(out). Its function is as follows. NDH shuttles electrons from NAD(P)H:plastoquinone, via FMN and iron-sulfur (Fe-S) centers, to quinones in the photosynthetic chain and possibly in a chloroplast respiratory chain. The immediate electron acceptor for the enzyme in this species is believed to be plastoquinone. Couples the redox reaction to proton translocation, and thus conserves the redox energy in a proton gradient. The chain is NAD(P)H-quinone oxidoreductase subunit 4L, organellar chromatophore from Paulinella chromatophora.